The primary structure comprises 120 residues: NAD(P)H-quinone oxidoreductase subunit 3, chloroplastic (120 aa).

3 consecutive transmembrane segments (helical) span residues 9-29 (IFWA…LISG), 64-84 (MFAL…PWAM), and 88-108 (VLGV…IVGS).

The protein belongs to the complex I subunit 3 family. NDH is composed of at least 16 different subunits, 5 of which are encoded in the nucleus.

It localises to the plastid. The protein localises to the chloroplast thylakoid membrane. It carries out the reaction a plastoquinone + NADH + (n+1) H(+)(in) = a plastoquinol + NAD(+) + n H(+)(out). It catalyses the reaction a plastoquinone + NADPH + (n+1) H(+)(in) = a plastoquinol + NADP(+) + n H(+)(out). In terms of biological role, NDH shuttles electrons from NAD(P)H:plastoquinone, via FMN and iron-sulfur (Fe-S) centers, to quinones in the photosynthetic chain and possibly in a chloroplast respiratory chain. The immediate electron acceptor for the enzyme in this species is believed to be plastoquinone. Couples the redox reaction to proton translocation, and thus conserves the redox energy in a proton gradient. In Amborella trichopoda, this protein is NAD(P)H-quinone oxidoreductase subunit 3, chloroplastic.